The sequence spans 335 residues: Probable cytosolic iron-sulfur protein assembly protein Ciao1 (335 aa).

WD repeat units lie at residues 12 to 51 (GHKG…WSTK), 57 to 96 (GHKR…FECN), 101 to 140 (GHEN…EFEC), 146 to 185 (SHTQ…NDWD), 192 to 231 (SHTS…NSAG), 250 to 289 (QHSR…KPDE), and 301 to 335 (AHDQ…KVTE).

It belongs to the WD repeat CIA1 family.

Functionally, essential component of the cytosolic iron-sulfur (Fe/S) protein assembly machinery. Required for the maturation of extramitochondrial Fe/S proteins. This chain is Probable cytosolic iron-sulfur protein assembly protein Ciao1, found in Drosophila yakuba (Fruit fly).